Here is a 315-residue protein sequence, read N- to C-terminus: Acetyl-coenzyme A carboxylase carboxyl transferase subunit alpha (315 aa).

Residues L39–G292 enclose the CoA carboxyltransferase C-terminal domain.

Belongs to the AccA family. In terms of assembly, acetyl-CoA carboxylase is a heterohexamer composed of biotin carboxyl carrier protein (AccB), biotin carboxylase (AccC) and two subunits each of ACCase subunit alpha (AccA) and ACCase subunit beta (AccD).

It is found in the cytoplasm. It carries out the reaction N(6)-carboxybiotinyl-L-lysyl-[protein] + acetyl-CoA = N(6)-biotinyl-L-lysyl-[protein] + malonyl-CoA. Its pathway is lipid metabolism; malonyl-CoA biosynthesis; malonyl-CoA from acetyl-CoA: step 1/1. In terms of biological role, component of the acetyl coenzyme A carboxylase (ACC) complex. First, biotin carboxylase catalyzes the carboxylation of biotin on its carrier protein (BCCP) and then the CO(2) group is transferred by the carboxyltransferase to acetyl-CoA to form malonyl-CoA. The polypeptide is Acetyl-coenzyme A carboxylase carboxyl transferase subunit alpha (Sphingopyxis alaskensis (strain DSM 13593 / LMG 18877 / RB2256) (Sphingomonas alaskensis)).